The chain runs to 940 residues: Antiviral innate immune response receptor RIG-I (940 aa).

CARD domains lie at 1-87 (MTAE…GLCE) and 92-172 (WDFQ…KTLK). Glycyl lysine isopeptide (Lys-Gly) (interchain with G-Cter in ubiquitin) cross-links involve residues Lys-48, Lys-96, Lys-154, Lys-164, Lys-172, and Lys-190. The tract at residues 219-928 (ENQNLSQNSC…LSFDAAEMAG (710 aa)) is interaction with ZC3HAV1. A Helicase ATP-binding domain is found at 249-428 (ALPAQNGKNT…AEATEYICKL (180 aa)). 262 to 269 (APTGCGKT) lines the ATP pocket. The DECH box motif lies at 370–373 (DECH). A Helicase C-terminal domain is found at 613 to 779 (KLRDLCFILQ…ILQTWDEAVF (167 aa)). The interval 738–928 (GSKCFLLTAN…LSFDAAEMAG (191 aa)) is mediates interaction with RNF135. Thr-773 bears the Phosphothreonine; by CK2 mark. The RLR CTR domain occupies 795 to 928 (DNQGKPEPVP…LSFDAAEMAG (134 aa)). Cys-813 lines the Zn(2+) pocket. Lys-815 is covalently cross-linked (Glycyl lysine isopeptide (Lys-Gly) (interchain with G-Cter in ubiquitin)). Cys-816 is a Zn(2+) binding site. Lys-861 is subject to N6-acetyllysine. Zn(2+)-binding residues include Cys-867 and Cys-872. An N6-acetyllysine modification is found at Lys-912.

The protein belongs to the helicase family. RLR subfamily. Monomer; maintained as a monomer in an autoinhibited state. Upon binding of viral RNAs and conformational shift, homooligomerizes and forms filaments on these molecules. Interacts (via tandem CARD domain) with MAVS/IPS1 promoting its filamentation. Interacts with DHX58/LGP2, IKBKE, TBK1 and STING1. Interacts (via CARD domain) with TRIM25 (via SPRY domain). Interacts (double-stranded RNA-bound oligomeric form) with RNF135 (homodimer); involved in RNA length-dependent activation of the RIG-I signaling pathway. Interacts with CYLD. Interacts with NLRC5; blocks the interaction of MAVS/IPS1 to RIGI. Interacts with SRC. Interacts with DDX60. Interacts with ZC3HAV1 (via zinc-fingers) in an RNA-dependent manner. Interacts (via tandem CARD domain) with SEC14L1; the interaction is direct and impairs the interaction of RIGI with MAVS/IPS1. Interacts with VCP/p97; interaction is direct and allows the recruitment of RNF125 and subsequent ubiquitination and degradation. Interacts with NOP53; may regulate RIGI through USP15-mediated 'Lys-63'-linked deubiquitination. Interacts with SIGLEC10, CBL and PTPN11; within a negative feedback loop leading to RIGI degradation. Interacts with LRRC25. Interacts with ZCCHC3; leading to activation of RIGI. Interacts with RNF123. Interacts with UBE2D3 and UBE2N; E2 ubiquitin ligases involved in RNF135-mediated ubiquitination of RIGI and activation of the RIG-I signaling pathway. Interacts with IFIT3. Interacts with DDX3X. Interacts with RTN3. Interacts with ARL16; this interaction is GTP-dependent and induced upon viral infection; this interaction suppresses the RNA sensing activity of RIGI. Interacts with DHX16; this interaction enhances RIGI-mediated antiviral response. Interacts with IRGM; promoting RIGI degradation. Interacts with IFI6; this interaction inhibits RIGI activation. Interacts with ECSIT; this interaction bridges RIGI to the MAVS complex at the mitochondrion. Interacts with YWHAE; this interaction drives RIGI at the mitochondrion. Phosphorylated in resting cells and dephosphorylated in RNA virus-infected cells. Phosphorylation at Thr-773 results in inhibition of its activity while dephosphorylation at these sites results in its activation. In terms of processing, ISGylated. Conjugated to ubiquitin-like protein ISG15 upon IFN-beta stimulation. ISGylation negatively regulates its function in antiviral signaling response. Post-translationally, sumoylated, probably by MUL1; inhibiting its polyubiquitination. Acetylated in response to RNA virus infection. Deacetylated by HDAC6 in the presence of viral mRNAs which is required for detection of viral RNA by RIGI. In terms of processing, ubiquitinated. 'Lys-63' ubiquitination by RNF135, which occurs after RNA-binding and homodimerization, releases the autoinhibition of the CARD domains by the RLR CTR domain, an essential step in the activation of the RIG-I signaling pathway. Also ubiquitinated by TRIM4. Also undergoes 'Lys-48' ubiquitination by RNF125 that leads to proteasomal degradation. 'Lys-48' ubiquitination follows viral infection and is enhanced by 'Lys-63'-linked ubiquitination of the CARD domains that promotes interaction with VCP/p97 and subsequent recruitment of RNF125. Within a negative feedback loop involving SIGLEC10 and PTPN11, 'Lys-48' ubiquitination at Lys-815 by CBL also elicits the proteasomal degradation of RIGI. Deubiquitinated by CYLD, a protease that selectively cleaves 'Lys-63'-linked ubiquitin chains. Also probably deubiquitinated by USP17L2/USP17 that cleaves 'Lys-48'- and 'Lys-63'-linked ubiquitin chains and positively regulates the receptor. Ubiquitinated by TRIM40 via 'Lys-48'-linked ubiquitination; leading to proteasomal degradation. Deubiquitinated by USP27X that cleaves 'Lys-63'-linked ubiquitin chains and inhibits the innate immune receptor activity. Deubiquitinated by USP3 that also cleaves 'Lys-63'-linked ubiquitin chains and inhibits the innate immune receptor activity. Post-translationally, degraded via selective autophagy following interaction with IRGM. IRGM promotes RIGI recruitment to autophagosome membranes, promoting its SQSTM1/p62-dependent autophagic degradation. As to expression, ubiquitously expressed, with highest levels in spleen, liver, intestine and heart. Up-regulated in tracheobronchial lymph node and tonsils during porcine reproductive and respiratory syndrome virus (PRRSV) infection.

The protein localises to the cytoplasm. It localises to the cell projection. The protein resides in the ruffle membrane. Its subcellular location is the cytoskeleton. It is found in the cell junction. The protein localises to the tight junction. The catalysed reaction is ATP + H2O = ADP + phosphate + H(+). Its function is as follows. Innate immune receptor that senses cytoplasmic viral nucleic acids and activates a downstream signaling cascade leading to the production of type I interferons and pro-inflammatory cytokines. Forms a ribonucleoprotein complex with viral RNAs on which it homooligomerizes to form filaments. The homooligomerization allows the recruitment of RNF135 an E3 ubiquitin-protein ligase that activates and amplifies the RIG-I-mediated antiviral signaling in an RNA length-dependent manner through ubiquitination-dependent and -independent mechanisms. Upon activation, associates with mitochondria antiviral signaling protein (MAVS/IPS1) that activates the IKK-related kinases TBK1 and IKBKE which in turn phosphorylate the interferon regulatory factors IRF3 and IRF7, activating transcription of antiviral immunological genes including the IFN-alpha and IFN-beta interferons. Ligands include: 5'-triphosphorylated ssRNA and dsRNA and short dsRNA (&lt;1 kb in length). In addition to the 5'-triphosphate moiety, blunt-end base pairing at the 5'-end of the RNA is very essential. Overhangs at the non-triphosphorylated end of the dsRNA RNA have no major impact on its activity. A 3'overhang at the 5'triphosphate end decreases and any 5'overhang at the 5' triphosphate end abolishes its activity. Detects both positive and negative strand RNA viruses including members of the families Paramyxoviridae, Rhabdoviridae: vesicular stomatitis virus (VSV) Orthomyxoviridae: influenza A and B virus, Flaviviridae: Japanese encephalitis virus (JEV). It also detects rotavirus and reovirus. Also involved in antiviral signaling in response to viruses containing a dsDNA genome. Detects dsRNA produced from non-self dsDNA by RNA polymerase III. May play important roles in granulocyte production and differentiation, bacterial phagocytosis and in the regulation of cell migration. This Sus scrofa (Pig) protein is Antiviral innate immune response receptor RIG-I.